The sequence spans 597 residues: DNA primase (597 aa).

Residues cysteine 40, histidine 43, cysteine 61, and cysteine 64 each contribute to the Zn(2+) site. Residues 40 to 64 (CPFHGEKTPSFSVSPEKQIFHCFGC) form a CHC2-type zinc finger. The Toprim domain occupies 262–342 (QEALLVEGFA…RVKVASLPNG (81 aa)). Mg(2+) contacts are provided by glutamate 268, aspartate 311, and aspartate 313. Over residues 429-447 (LSRSQRERTKPREAPDGET) the composition is skewed to basic and acidic residues. The interval 429-448 (LSRSQRERTKPREAPDGETA) is disordered.

The protein belongs to the DnaG primase family. As to quaternary structure, monomer. Interacts with replicative helicase DnaB, as DnaB(6):DnaG(3). A stable complex DnaI(6):DnaB(6):DnaG(3) fragment can be isolated; DnaI and DnaG do not contact each other (DnaI in this complex is derived from B.subtilis). Requires Zn(2+) as cofactor. The cofactor is Mg(2+).

It catalyses the reaction ssDNA + n NTP = ssDNA/pppN(pN)n-1 hybrid + (n-1) diphosphate.. Functionally, RNA polymerase that catalyzes the synthesis of short RNA molecules used as primers for DNA polymerase during DNA replication. This is DNA primase from Geobacillus stearothermophilus (Bacillus stearothermophilus).